Consider the following 255-residue polypeptide: Pyridoxine 5'-phosphate synthase (255 aa).

Residues asparagine 8 and arginine 19 each coordinate 3-amino-2-oxopropyl phosphate. Histidine 44 (proton acceptor) is an active-site residue. 1-deoxy-D-xylulose 5-phosphate is bound by residues arginine 46 and histidine 51. The Proton acceptor role is filled by glutamate 74. Threonine 111 serves as a coordination point for 1-deoxy-D-xylulose 5-phosphate. Residue histidine 202 is the Proton donor of the active site. 3-amino-2-oxopropyl phosphate is bound by residues aspartate 203 and 225–226 (GH).

The protein belongs to the PNP synthase family. As to quaternary structure, homooctamer; tetramer of dimers.

The protein localises to the cytoplasm. It carries out the reaction 3-amino-2-oxopropyl phosphate + 1-deoxy-D-xylulose 5-phosphate = pyridoxine 5'-phosphate + phosphate + 2 H2O + H(+). It participates in cofactor biosynthesis; pyridoxine 5'-phosphate biosynthesis; pyridoxine 5'-phosphate from D-erythrose 4-phosphate: step 5/5. Its function is as follows. Catalyzes the complicated ring closure reaction between the two acyclic compounds 1-deoxy-D-xylulose-5-phosphate (DXP) and 3-amino-2-oxopropyl phosphate (1-amino-acetone-3-phosphate or AAP) to form pyridoxine 5'-phosphate (PNP) and inorganic phosphate. This chain is Pyridoxine 5'-phosphate synthase, found in Xanthomonas oryzae pv. oryzae (strain PXO99A).